The primary structure comprises 345 residues: tRNA N6-adenosine threonylcarbamoyltransferase (345 aa).

Positions 111 and 115 each coordinate Fe cation. Residues 136–140 (LVSGG), D169, G182, and N279 contribute to the substrate site. D307 is a binding site for Fe cation.

The protein belongs to the KAE1 / TsaD family. The cofactor is Fe(2+).

Its subcellular location is the cytoplasm. It catalyses the reaction L-threonylcarbamoyladenylate + adenosine(37) in tRNA = N(6)-L-threonylcarbamoyladenosine(37) in tRNA + AMP + H(+). Functionally, required for the formation of a threonylcarbamoyl group on adenosine at position 37 (t(6)A37) in tRNAs that read codons beginning with adenine. Is involved in the transfer of the threonylcarbamoyl moiety of threonylcarbamoyl-AMP (TC-AMP) to the N6 group of A37, together with TsaE and TsaB. TsaD likely plays a direct catalytic role in this reaction. The sequence is that of tRNA N6-adenosine threonylcarbamoyltransferase from Actinobacillus succinogenes (strain ATCC 55618 / DSM 22257 / CCUG 43843 / 130Z).